Consider the following 382-residue polypeptide: Alpha-2B adrenergic receptor (382 aa).

Residues 1-25 (AIAAVITFLILFTIFGNALVILAVL) form a helical membrane-spanning segment. Residues 26–36 (TSRSLRAPQNL) lie on the Cytoplasmic side of the membrane. The helical transmembrane segment at 37–62 (FLVSLAAADILVATLIIPFSLANELL) threads the bilayer. The Extracellular portion of the chain corresponds to 63 to 72 (GYWYFRHTWC). C72 and C151 are disulfide-bonded. A helical membrane pass occupies residues 73 to 95 (EVYLALDVLFCTSSIVHLCAISL). Residues 96–117 (DRYWSVSRALEYNSKRTPRRIK) are Cytoplasmic-facing. Residues 118-140 (GIILTVWLIAAFISLPPLIYKGD) traverse the membrane as a helical segment. Topologically, residues 141-156 (KGKKPGGRPQCKLNEE) are extracellular. Residues 157 to 180 (AWYILSSSIGSFFAPCLIMILVYL) form a helical membrane-spanning segment. Residues 181-346 (RIYLIAKRRN…MNREKRFTFV (166 aa)) are Cytoplasmic-facing. The tract at residues 192 to 305 (QGPHGKQAPG…QGTPNFQPSQ (114 aa)) is disordered. Residues 271–284 (EEEEEEEEEEEEEC) are compositionally biased toward acidic residues. Positions 291-305 (TSSSLQGTPNFQPSQ) are enriched in polar residues. A helical transmembrane segment spans residues 347–370 (LAVVIGVFVLCWFPFFFSYSLGAI). Residues 371 to 379 (CPQHCKVPH) are Extracellular-facing. Residues 380–382 (GLF) form a helical membrane-spanning segment.

The protein belongs to the G-protein coupled receptor 1 family. Adrenergic receptor subfamily. ADRA2B sub-subfamily. As to quaternary structure, interacts with RAB26. Interacts with PPP1R9B. Interacts with GGA1, GGA2 and GGA3.

The protein resides in the cell membrane. Its function is as follows. Alpha-2 adrenergic receptors mediate the catecholamine-induced inhibition of adenylate cyclase through the action of G proteins. The chain is Alpha-2B adrenergic receptor (ADRA2B) from Didelphis virginiana (North American opossum).